The following is a 245-amino-acid chain: tRNA (guanine-N(1)-)-methyltransferase (245 aa).

Residues G111 and 131–136 (MGDYVL) each bind S-adenosyl-L-methionine.

This sequence belongs to the RNA methyltransferase TrmD family. As to quaternary structure, homodimer.

Its subcellular location is the cytoplasm. The enzyme catalyses guanosine(37) in tRNA + S-adenosyl-L-methionine = N(1)-methylguanosine(37) in tRNA + S-adenosyl-L-homocysteine + H(+). Functionally, specifically methylates guanosine-37 in various tRNAs. The protein is tRNA (guanine-N(1)-)-methyltransferase of Staphylococcus epidermidis (strain ATCC 12228 / FDA PCI 1200).